Consider the following 199-residue polypeptide: Recombination protein RecR (199 aa).

The segment at 58 to 73 (CVNCGNIGTGDLCEIC) adopts a C4-type zinc-finger fold. The region spanning 81–176 (GEICVVEDVA…TLSSLAQGVP (96 aa)) is the Toprim domain.

The protein belongs to the RecR family.

In terms of biological role, may play a role in DNA repair. It seems to be involved in an RecBC-independent recombinational process of DNA repair. It may act with RecF and RecO. This Jannaschia sp. (strain CCS1) protein is Recombination protein RecR.